Consider the following 1222-residue polypeptide: Serine/threonine-protein kinase WNK4 (1222 aa).

A compositionally biased stretch (polar residues) spans 1 to 17 (MLAPRNTETGVHMSQTE). A disordered region spans residues 1–163 (MLAPRNTETG…KEDTETQAVA (163 aa)). Ser-95 carries the phosphoserine modification. Over residues 135–152 (EPPRVPDAAARERRREQE) the composition is skewed to basic and acidic residues. Residues Lys-154 and Lys-172 each participate in a glycyl lysine isopeptide (Lys-Gly) (interchain with G-Cter in ubiquitin) cross-link. One can recognise a Protein kinase domain in the interval 171-429 (LKFDIEIGRG…IQDLLTHAFF (259 aa)). Ser-181 provides a ligand contact to ATP. Residues Lys-183, Lys-223, and Lys-238 each participate in a glycyl lysine isopeptide (Lys-Gly) (interchain with G-Cter in ubiquitin) cross-link. ATP contacts are provided by residues 251 to 254 (TELM) and Lys-301. Asp-318 functions as the Proton acceptor in the catalytic mechanism. Lys-325 is covalently cross-linked (Glycyl lysine isopeptide (Lys-Gly) (interchain with G-Cter in ubiquitin)). Ser-328 and Ser-332 each carry phosphoserine; by autocatalysis. Residues Lys-384, Lys-390, Lys-447, and Lys-451 each participate in a glycyl lysine isopeptide (Lys-Gly) (interchain with G-Cter in ubiquitin) cross-link. The disordered stretch occupies residues 527–562 (LEVLPPDSGPPPATVSMTPGPPSAFPPEPEEPEADQ). Residues 533 to 553 (DSGPPPATVSMTPGPPSAFPP) are compositionally biased toward pro residues. The tract at residues 554–564 (EPEEPEADQHQ) is interaction with KLHL3. Ser-572 is modified (phosphoserine). Disordered stretches follow at residues 591-612 (FLDA…PAEP), 626-679 (RSGP…SVSD), 747-809 (DAGP…GTPF), 836-873 (QVSS…SPLP), and 927-1087 (SPGL…QPSP). The segment covering 627–638 (SGPGSDFSPGDS) has biased composition (low complexity). The segment covering 659-672 (NPVKTLRRRPRSRL) has biased composition (basic residues). Composition is skewed to low complexity over residues 792–809 (FSTS…GTPF) and 845–873 (APSS…SPLP). Positions 935–946 (PPAPPGPLPSMP) are enriched in pro residues. Polar residues predominate over residues 953–963 (DQESLSAQTAE). Lys-990 participates in a covalent cross-link: Glycyl lysine isopeptide (Lys-Gly) (interchain with G-Cter in ubiquitin). The RFXV motif motif lies at 996-999 (RFQV). A Phosphoserine modification is found at Ser-1014. Residues 1044-1056 (ETREALAESDRAA) show a composition bias toward basic and acidic residues. Positions 1076-1086 (GGSSPILSQPS) are enriched in polar residues. Glycyl lysine isopeptide (Lys-Gly) (interchain with G-Cter in ubiquitin) cross-links involve residues Lys-1123, Lys-1136, and Lys-1137. The disordered stretch occupies residues 1169–1222 (SKGSFPTSRRNSLQRSDLPGPGIMRRNSLSGSSTGSQEQRASKGVTFAGDVGRM). Composition is skewed to polar residues over residues 1172 to 1183 (SFPTSRRNSLQR) and 1195 to 1207 (NSLS…SQEQ). Phosphoserine is present on Ser-1196.

It belongs to the protein kinase superfamily. Ser/Thr protein kinase family. WNK subfamily. In terms of assembly, interacts with the C-terminal region of KCNJ1. Interacts with WNK1 and WNK3. Interacts with KLHL3. It depends on Mg(2+) as a cofactor. Post-translationally, autophosphorylated at Ser-328 and Ser-332, promoting its activation. Phosphorylated by WNK1 and WNK3. Phosphorylated at Ser-572 in a MAP3K15/ASK3-dependent process in response to osmotic stress or hypotonic low-chloride stimulation. In terms of processing, ubiquitinated by the BCR(KLHL3) complex, leading to its degradation. Also ubiquitinated by the BCR(KLHL2) complex.

The protein resides in the cell junction. Its subcellular location is the tight junction. The enzyme catalyses L-seryl-[protein] + ATP = O-phospho-L-seryl-[protein] + ADP + H(+). It carries out the reaction L-threonyl-[protein] + ATP = O-phospho-L-threonyl-[protein] + ADP + H(+). With respect to regulation, activation requires autophosphorylation of Ser-328 and Ser-332. Autophosphorylation and subsequent activation is inhibited by increases in intracellular ionic strength: Cl(-) potently inhibits WNK4 kinase activity via direct binding. Also inhibited by K(+) ions. Serine/threonine-protein kinase component of the WNK4-SPAK/OSR1 kinase cascade, which acts as a key regulator of ion transport in the distal nephron and blood pressure. The WNK4-SPAK/OSR1 kinase cascade is composed of WNK4, which mediates phosphorylation and activation of downstream kinases OXSR1/OSR1 and STK39/SPAK. Following activation, OXSR1/OSR1 and STK39/SPAK catalyze phosphorylation of ion cotransporters, such as SLC12A1/NKCC2, SLC12A2/NKCC1, SLC12A3/NCC, SLC12A5/KCC2 or SLC12A6/KCC3, regulating their activity. Acts as a molecular switch that regulates the balance between renal salt reabsorption and K(+) secretion by modulating the activities of renal transporters and channels, including the Na-Cl cotransporter SLC12A3/NCC and the K(+) channel, KCNJ1/ROMK. Regulates NaCl reabsorption in the distal nephron by activating the thiazide-sensitive Na-Cl cotransporter SLC12A3/NCC in distal convoluted tubule cells of kidney: activates SLC12A3/NCC in a OXSR1/OSR1- and STK39/SPAK-dependent process. Also acts as a scaffold protein independently of its protein kinase activity: negatively regulates cell membrane localization of various transporters and channels (CFTR, KCNJ1/ROMK, SLC4A4, SLC26A9 and TRPV4) by clathrin-dependent endocytosis. Also inhibits the activity of the epithelial Na(+) channel (ENaC) SCNN1A, SCNN1B, SCNN1D in a inase-independent mechanism. May also phosphorylate NEDD4L. This is Serine/threonine-protein kinase WNK4 from Rattus norvegicus (Rat).